The sequence spans 332 residues: Melanocortin receptor 4 (332 aa).

At 1 to 43 (MNSTHHHGMYTSLHLWNRSSYGLHGNASESLGKGHPDGGCYEQ) the chain is on the extracellular side. Residues Asn2, Asn17, and Asn26 are each glycosylated (N-linked (GlcNAc...) asparagine). 2 cysteine pairs are disulfide-bonded: Cys40/Cys279 and Cys271/Cys277. Residues 44-69 (LFVSPEVFVTLGVISLLENILVIVAI) traverse the membrane as a helical segment. At 70–81 (AKNKNLHSPMYF) the chain is on the cytoplasmic side. A helical membrane pass occupies residues 82–106 (FICSLAVADMLVSVSNGSETIVITL). Glu100 is a binding site for Ca(2+). Over 107-123 (LNSTDTDAQSFTVNIDN) the chain is Extracellular. An N-linked (GlcNAc...) asparagine glycan is attached at Asn108. Residues Asp122 and Asp126 each contribute to the Ca(2+) site. Residues 124–145 (VIDSVICSSLLASICSLLSIAV) traverse the membrane as a helical segment. Residues 146 to 165 (DRYFTIFYALQYHNIMTVRR) are Cytoplasmic-facing. The helical transmembrane segment at 166-186 (VGIIISCIWAACTVSGVLFII) threads the bilayer. Topologically, residues 187–191 (YSDSS) are extracellular. A helical membrane pass occupies residues 192–215 (AVIICLISMFFTMLVLMASLYVHM). At 216 to 248 (FLMARLHIKRIAVLPGTGTIRQGTNMKGAITLT) the chain is on the cytoplasmic side. Residues 249 to 271 (ILIGVFVVCWAPFFLHLLFYISC) form a helical membrane-spanning segment. Residues 272 to 280 (PQNPYCVCF) are Extracellular-facing. The chain crosses the membrane as a helical span at residues 281 to 304 (MSHFNLYLILIMCNAVIDPLIYAL). Over 305–332 (RSQELRKTFKEIICFYPLGGICELSSRY) the chain is Cytoplasmic. Cys318 carries the S-palmitoyl cysteine lipid modification.

This sequence belongs to the G-protein coupled receptor 1 family. As to quaternary structure, homodimer; disulfide-linked, also forms higher order oligomers. Interacts with GNAS. Interacts with ATRNL1. Interacts with MGRN1; this interaction competes with GNAS-binding and thus inhibits agonist-induced cAMP production. Interacts with MRAP and MRAP2; these associated factors increase ligand-sensitivity and generation of cAMP.

The protein resides in the cell membrane. Functionally, hormone receptor that acts as a key component of the leptin-melanocortin pathway at the intersection of homeostatic maintenance of energetic state. Plays a role in regulating food intake: activation by a stimulating hormone such as anorexigenic alpha-melanocyte stimulating hormone (alpha-MSH) inhibits appetite, whereas binding to a natural antagonist like Agouti-related protein/AGRP promotes appetite. G-protein-coupled receptor that activates conventional Galphas signaling leading to induction of anorexogenic signaling in the hypothalamus to result in negative energy balance. Regulates the firing activity of neurons from the hypothalamus by alpha-MSH and AGRP independently of Galphas signaling by ligand-induced coupling of closure of inwardly rectifying potassium channel KCNJ13. In intestinal epithelial cells, plays a role in the inhibition of hepatic glucose production via nesfatin-1/NUCB2 leading to increased cyclic adenosine monophosphate (cAMP) levels and glucagon-like peptide 1 (GLP-1) secretion in the intestinal epithelium. The sequence is that of Melanocortin receptor 4 (Mc4r) from Mus musculus (Mouse).